The sequence spans 130 residues: Small ribosomal subunit protein uS8 (130 aa).

This sequence belongs to the universal ribosomal protein uS8 family. Part of the 30S ribosomal subunit.

Functionally, one of the primary rRNA binding proteins, it binds directly to 16S rRNA central domain where it helps coordinate assembly of the platform of the 30S subunit. The polypeptide is Small ribosomal subunit protein uS8 (Methanosphaera stadtmanae (strain ATCC 43021 / DSM 3091 / JCM 11832 / MCB-3)).